The chain runs to 134 residues: Small ribosomal subunit protein uS12 (134 aa).

A 3-methylthioaspartic acid modification is found at aspartate 89. A disordered region spans residues 101-134 (TLDASGVNGRNQSRSKYGTKRPKPGQAAAGGKKK). The segment covering 125–134 (GQAAAGGKKK) has biased composition (low complexity).

Belongs to the universal ribosomal protein uS12 family. As to quaternary structure, part of the 30S ribosomal subunit. Contacts proteins S8 and S17. May interact with IF1 in the 30S initiation complex.

In terms of biological role, with S4 and S5 plays an important role in translational accuracy. Interacts with and stabilizes bases of the 16S rRNA that are involved in tRNA selection in the A site and with the mRNA backbone. Located at the interface of the 30S and 50S subunits, it traverses the body of the 30S subunit contacting proteins on the other side and probably holding the rRNA structure together. The combined cluster of proteins S8, S12 and S17 appears to hold together the shoulder and platform of the 30S subunit. The sequence is that of Small ribosomal subunit protein uS12 from Gemmatimonas aurantiaca (strain DSM 14586 / JCM 11422 / NBRC 100505 / T-27).